The following is a 210-amino-acid chain: Late histone H1 (210 aa).

Disordered regions lie at residues 1–21 (MSAAKPKTAKKARAAPAHPPT) and 86–210 (SFKL…AAKK). The H15 domain maps to 17–91 (AHPPTSQMVV…GASGSFKLGK (75 aa)). Basic residues predominate over residues 104–113 (AAAKKAKLAA). Basic and acidic residues predominate over residues 114 to 123 (KKKEQKEKKA). The span at 124–210 (AKTKARKEKL…KPAAKKAAKK (87 aa)) shows a compositional bias: basic residues.

It belongs to the histone H1/H5 family.

The protein localises to the nucleus. Its subcellular location is the chromosome. Histones H1 are necessary for the condensation of nucleosome chains into higher-order structures. This Lytechinus pictus (Painted sea urchin) protein is Late histone H1.